Here is a 380-residue protein sequence, read N- to C-terminus: Cytochrome b (380 aa).

A run of 4 helical transmembrane segments spans residues 34 to 54 (FGSL…LLAM), 78 to 99 (WLIR…FLHI), 114 to 134 (WNTG…GYVL), and 179 to 199 (FFAL…THLM). Heme b is bound by residues H84 and H98. Heme b is bound by residues H183 and H197. A ubiquinone is bound at residue H202. Helical transmembrane passes span 227–247 (LKDI…ALFS), 289–309 (LGGV…PFLH), 321–341 (LSQA…WVGS), and 348–368 (FIII…ILFP).

This sequence belongs to the cytochrome b family. As to quaternary structure, the cytochrome bc1 complex contains 11 subunits: 3 respiratory subunits (MT-CYB, CYC1 and UQCRFS1), 2 core proteins (UQCRC1 and UQCRC2) and 6 low-molecular weight proteins (UQCRH/QCR6, UQCRB/QCR7, UQCRQ/QCR8, UQCR10/QCR9, UQCR11/QCR10 and a cleavage product of UQCRFS1). This cytochrome bc1 complex then forms a dimer. It depends on heme b as a cofactor.

The protein resides in the mitochondrion inner membrane. Component of the ubiquinol-cytochrome c reductase complex (complex III or cytochrome b-c1 complex) that is part of the mitochondrial respiratory chain. The b-c1 complex mediates electron transfer from ubiquinol to cytochrome c. Contributes to the generation of a proton gradient across the mitochondrial membrane that is then used for ATP synthesis. The polypeptide is Cytochrome b (MT-CYB) (Syrmaticus reevesii (Reeves's pheasant)).